The chain runs to 463 residues: NADH dehydrogenase [ubiquinone] iron-sulfur protein 2, mitochondrial (463 aa).

The N-terminal 33 residues, 1–33, are a transit peptide targeting the mitochondrion; it reads MAALRALCRLRGAAAQVLRPGAGVRLPIQPSRG. An N6-acetyllysine modification is found at Lys62. Arg118 bears the Symmetric dimethylarginine mark. Residues Cys326, Cys332, and Cys347 each coordinate [4Fe-4S] cluster.

Belongs to the complex I 49 kDa subunit family. As to quaternary structure, core subunit of respiratory chain NADH dehydrogenase (Complex I) which is composed of 45 different subunits. Component of the iron-sulfur (IP) fragment of the enzyme. Interacts with NDUFAF3. Interacts with NDUFAF7. Interacts with CERS2. It depends on [4Fe-4S] cluster as a cofactor. In terms of processing, dimethylation at Arg-118 by NDUFAF7 takes place after NDUFS2 assembles into the complex I, leading to stabilize the early intermediate complex.

It is found in the mitochondrion inner membrane. It catalyses the reaction a ubiquinone + NADH + 5 H(+)(in) = a ubiquinol + NAD(+) + 4 H(+)(out). Its function is as follows. Core subunit of the mitochondrial membrane respiratory chain NADH dehydrogenase (Complex I) which catalyzes electron transfer from NADH through the respiratory chain, using ubiquinone as an electron acceptor. Essential for the catalytic activity and assembly of complex I. Redox-sensitive, critical component of the oxygen-sensing pathway in the pulmonary vasculature which plays a key role in acute pulmonary oxygen-sensing and hypoxic pulmonary vasoconstriction. Plays an important role in carotid body sensing of hypoxia. Essential for glia-like neural stem and progenitor cell proliferation, differentiation and subsequent oligodendrocyte or neuronal maturation. The polypeptide is NADH dehydrogenase [ubiquinone] iron-sulfur protein 2, mitochondrial (NDUFS2) (Bos taurus (Bovine)).